The sequence spans 255 residues: uncharacterized protein (255 aa).

Belongs to the methyltransferase superfamily.

This is an uncharacterized protein from Mycolicibacterium vanbaalenii (strain DSM 7251 / JCM 13017 / BCRC 16820 / KCTC 9966 / NRRL B-24157 / PYR-1) (Mycobacterium vanbaalenii).